The sequence spans 388 residues: Chalcone synthase (388 aa).

Cys-164 is an active-site residue.

The protein belongs to the thiolase-like superfamily. Chalcone/stilbene synthases family.

The catalysed reaction is (E)-4-coumaroyl-CoA + 3 malonyl-CoA + 3 H(+) = 2',4,4',6'-tetrahydroxychalcone + 3 CO2 + 4 CoA. The protein operates within secondary metabolite biosynthesis; flavonoid biosynthesis. The primary product of this enzyme is 4,2',4',6'-tetrahydroxychalcone (also termed naringenin-chalcone or chalcone) which can under specific conditions spontaneously isomerize into naringenin. The protein is Chalcone synthase (CHS) of Vigna unguiculata (Cowpea).